Consider the following 278-residue polypeptide: Aquaporin NIP3-3 (278 aa).

The next 2 helical transmembrane spans lie at 70 to 90 (VSAEFFGTFILIFTVLSTIIM) and 99 to 119 (TLLGIATSAGLAVTVLVLSLI). Residues 127-129 (NPA) carry the NPA 1 motif. The next 3 membrane-spanning stretches (helical) occupy residues 141 to 163 (PSAHLLPYISSQILGAVAASFAV), 185 to 205 (AFFVEFIITFFLLFIITALAT), and 213 to 233 (LIAVAVGATVMMNILVAGPST). Residues 238–240 (NPA) carry the NPA 2 motif. The chain crosses the membrane as a helical span at residues 255–275 (IWVYLVATPLGAIAGTGAYVA).

Belongs to the MIP/aquaporin (TC 1.A.8) family. NIP (TC 1.A.8.12) subfamily. In terms of tissue distribution, expressed in leaves and at lower levels in roots and anthers.

It localises to the membrane. Its function is as follows. Aquaporins facilitate the transport of water and small neutral solutes across cell membranes. The chain is Aquaporin NIP3-3 (NIP3-3) from Oryza sativa subsp. japonica (Rice).